The sequence spans 109 residues: ATP-dependent Clp protease adapter protein ClpS (109 aa).

Residues 1 to 20 (MAERKQGGQGNGVGSSVVTE) are disordered.

Belongs to the ClpS family. As to quaternary structure, binds to the N-terminal domain of the chaperone ClpA.

Its function is as follows. Involved in the modulation of the specificity of the ClpAP-mediated ATP-dependent protein degradation. The sequence is that of ATP-dependent Clp protease adapter protein ClpS from Caulobacter vibrioides (strain NA1000 / CB15N) (Caulobacter crescentus).